The chain runs to 555 residues: Energy-dependent translational throttle protein EttA (555 aa).

ABC transporter domains are found at residues Tyr-6–Ala-259 and Leu-324–Tyr-550. Gly-39 to Ser-46 is a binding site for ATP. The tract at residues Ser-95–Asn-139 is arm. Residues Gly-242–Lys-322 are ptIM. Gly-356–Ser-363 contacts ATP.

This sequence belongs to the ABC transporter superfamily. ABCF family. Translational throttle EttA subfamily. In terms of assembly, monomer. Probably contacts ribosomal proteins L1, L5, L33 and S7, the 16S and 23S rRNA and the P-site containing tRNA(fMet).

It is found in the cytoplasm. It catalyses the reaction ATP + H2O = ADP + phosphate + H(+). A translation factor that gates the progression of the 70S ribosomal initiation complex (IC, containing tRNA(fMet) in the P-site) into the translation elongation cycle by using a mechanism sensitive to the ATP/ADP ratio. Binds to the 70S ribosome E-site where it modulates the state of the translating ribosome during subunit translocation. ATP hydrolysis probably frees it from the ribosome, which can enter the elongation phase. The protein is Energy-dependent translational throttle protein EttA of Escherichia coli O157:H7.